The primary structure comprises 245 residues: UPF0246 protein Cgl1995/cg2186 (245 aa).

It belongs to the UPF0246 family.

In Corynebacterium glutamicum (strain ATCC 13032 / DSM 20300 / JCM 1318 / BCRC 11384 / CCUG 27702 / LMG 3730 / NBRC 12168 / NCIMB 10025 / NRRL B-2784 / 534), this protein is UPF0246 protein Cgl1995/cg2186.